We begin with the raw amino-acid sequence, 435 residues long: Ribosomal protein uS12 methylthiotransferase RimO (435 aa).

An MTTase N-terminal domain is found at His3–Pro113. Positions 12, 48, 77, 144, 148, and 151 each coordinate [4Fe-4S] cluster. The region spanning Leu130–Asn367 is the Radical SAM core domain. The region spanning Lys370–Val435 is the TRAM domain.

It belongs to the methylthiotransferase family. RimO subfamily. Requires [4Fe-4S] cluster as cofactor.

The protein localises to the cytoplasm. It carries out the reaction L-aspartate(89)-[ribosomal protein uS12]-hydrogen + (sulfur carrier)-SH + AH2 + 2 S-adenosyl-L-methionine = 3-methylsulfanyl-L-aspartate(89)-[ribosomal protein uS12]-hydrogen + (sulfur carrier)-H + 5'-deoxyadenosine + L-methionine + A + S-adenosyl-L-homocysteine + 2 H(+). Its function is as follows. Catalyzes the methylthiolation of an aspartic acid residue of ribosomal protein uS12. The sequence is that of Ribosomal protein uS12 methylthiotransferase RimO from Legionella pneumophila subsp. pneumophila (strain Philadelphia 1 / ATCC 33152 / DSM 7513).